A 459-amino-acid polypeptide reads, in one-letter code: MTLPGHPTGMARPRGAGPCSPGLERAPRRSVGELRLLFEARCAAVAAAAAAGEPRARGAKRRGGQVPNGLPRAAPAPVIPQLTVTSEEDVAPASPGPPDREGNWLPAAGSHLQQPRRLSTSSLSSTGSSSLLEDSEDDLLSDSESRSRGNVQLETSEDVGQKSHWQKIRTMVNLPVMSPFKKRYSWVQLAGHTGSFKAAGTSGLILKRSSEPEHYCLVRLMADVLRGCVPAFHGVVERDGESYLQLQDLLDGFDGPCVLDCKMGVRTYLEEELTKARERPKLRKDMYKKMLAVDPEAPTEEEHAQRAVTKPRYMQWREGISSSTTLGFRIEGIKKADGSCSTDFKTTRSREQVTRVFEEFMQGDAEVLKRYLNRLQQIRDTLEISDFFRRHEVIGSSLLFVHDHCHRAGVWLIDFGKTTPLPDGQILDHRRPWEEGNREDGYLLGLDNLIGILANLAER.

Residues 1-26 are disordered; it reads MTLPGHPTGMARPRGAGPCSPGLERA. R35, R55, and R62 each carry omega-N-methylarginine. A disordered region spans residues 49-164; sequence AAAGEPRARG…TSEDVGQKSH (116 aa). Residues 116-132 show a composition bias toward low complexity; sequence RRLSTSSLSSTGSSSLL. Phosphoserine occurs at positions 135 and 195. ATP-binding positions include S195, K207, 247–249, and D260; that span reads QDL. The substrate site is built by K262 and R283. Positions 285–293 are calmodulin-binding; the sequence is DMYKKMLAV. Residue 310–317 participates in substrate binding; that stretch reads KPRYMQWR. Residues K334 and D414 each contribute to the ATP site. K417 provides a ligand contact to substrate.

Belongs to the inositol phosphokinase (IPK) family.

Its subcellular location is the cytoplasm. It is found in the cytoskeleton. The catalysed reaction is 1D-myo-inositol 1,4,5-trisphosphate + ATP = 1D-myo-inositol 1,3,4,5-tetrakisphosphate + ADP + H(+). With respect to regulation, activated by calcium/calmodulin. Catalyzes the phosphorylation of 1D-myo-inositol 1,4,5-trisphosphate (InsP3) into 1D-myo-inositol 1,3,4,5-tetrakisphosphate and participates to the regulation of calcium homeostasis. The protein is Inositol-trisphosphate 3-kinase A of Rattus norvegicus (Rat).